The chain runs to 170 residues: Adenine phosphoribosyltransferase (170 aa).

It belongs to the purine/pyrimidine phosphoribosyltransferase family. As to quaternary structure, homodimer.

Its subcellular location is the cytoplasm. It catalyses the reaction AMP + diphosphate = 5-phospho-alpha-D-ribose 1-diphosphate + adenine. Its pathway is purine metabolism; AMP biosynthesis via salvage pathway; AMP from adenine: step 1/1. Its function is as follows. Catalyzes a salvage reaction resulting in the formation of AMP, that is energically less costly than de novo synthesis. The polypeptide is Adenine phosphoribosyltransferase (Brevibacillus brevis (strain 47 / JCM 6285 / NBRC 100599)).